Here is a 703-residue protein sequence, read N- to C-terminus: Pentatricopeptide repeat-containing protein At1g22830 (703 aa).

PPR repeat units lie at residues 82–116 (VLYS…GLEF), 117–147 (DSVL…SEIL), 148–182 (HPLP…GIRA), 183–217 (DEFT…SHRC), 218–248 (NLYV…MSER), 249–283 (DAVS…GVEA), 284–318 (SIVT…NVRI), 319–353 (GSVA…CSFS), 356–386 (IDNV…VEAN), 387–421 (SLST…GFHP), 422–452 (NHIT…ILRR), 458–488 (CLIL…MRKR), 489–523 (DKVT…GIKP), 524–554 (DHVT…MEHV), and 560–594 (RLEH…PSSA). The tract at residues 595 to 671 (MCATLLKACL…AHEFALMETD (77 aa)) is type E motif. Residues 671 to 703 (DSELDGENNKPMNDDSVINQEQSSDEERLVEVG) form a disordered region.

Belongs to the PPR family. PCMP-E subfamily.

The protein is Pentatricopeptide repeat-containing protein At1g22830 (PCMP-E24) of Arabidopsis thaliana (Mouse-ear cress).